A 240-amino-acid chain; its full sequence is Phosphoribosylaminoimidazole-succinocarboxamide synthase (240 aa).

It belongs to the SAICAR synthetase family.

The enzyme catalyses 5-amino-1-(5-phospho-D-ribosyl)imidazole-4-carboxylate + L-aspartate + ATP = (2S)-2-[5-amino-1-(5-phospho-beta-D-ribosyl)imidazole-4-carboxamido]succinate + ADP + phosphate + 2 H(+). Its pathway is purine metabolism; IMP biosynthesis via de novo pathway; 5-amino-1-(5-phospho-D-ribosyl)imidazole-4-carboxamide from 5-amino-1-(5-phospho-D-ribosyl)imidazole-4-carboxylate: step 1/2. This Wolbachia pipientis wMel protein is Phosphoribosylaminoimidazole-succinocarboxamide synthase.